The following is a 141-amino-acid chain: Nucleoside triphosphatase NudI (141 aa).

A Nudix hydrolase domain is found at 1–141 (MRQRTIVCPL…RHTLALKGLL (141 aa)). Residues 38–59 (GGVEPGERIEEALRREIREELG) carry the Nudix box motif.

This sequence belongs to the Nudix hydrolase family. NudI subfamily. Monomer. Mg(2+) serves as cofactor.

The catalysed reaction is a ribonucleoside 5'-triphosphate + H2O = a ribonucleoside 5'-phosphate + diphosphate + H(+). The enzyme catalyses a 2'-deoxyribonucleoside 5'-triphosphate + H2O = a 2'-deoxyribonucleoside 5'-phosphate + diphosphate + H(+). It catalyses the reaction dUTP + H2O = dUMP + diphosphate + H(+). It carries out the reaction dTTP + H2O = dTMP + diphosphate + H(+). The catalysed reaction is dCTP + H2O = dCMP + diphosphate + H(+). In terms of biological role, catalyzes the hydrolysis of nucleoside triphosphates, with a preference for pyrimidine deoxynucleoside triphosphates (dUTP, dTTP and dCTP). In Salmonella paratyphi B (strain ATCC BAA-1250 / SPB7), this protein is Nucleoside triphosphatase NudI.